The following is a 251-amino-acid chain: 3-dehydroquinate dehydratase (251 aa).

Residues 47 to 49 and arginine 83 contribute to the 3-dehydroquinate site; that span reads EWR. The active-site Proton donor/acceptor is the histidine 144. Lysine 171 acts as the Schiff-base intermediate with substrate in catalysis. 3-dehydroquinate-binding residues include arginine 214, serine 233, and glutamine 237.

It belongs to the type-I 3-dehydroquinase family. Homodimer.

The enzyme catalyses 3-dehydroquinate = 3-dehydroshikimate + H2O. The protein operates within metabolic intermediate biosynthesis; chorismate biosynthesis; chorismate from D-erythrose 4-phosphate and phosphoenolpyruvate: step 3/7. Involved in the third step of the chorismate pathway, which leads to the biosynthesis of aromatic amino acids. Catalyzes the cis-dehydration of 3-dehydroquinate (DHQ) and introduces the first double bond of the aromatic ring to yield 3-dehydroshikimate. This is 3-dehydroquinate dehydratase from Klebsiella pneumoniae (strain 342).